Reading from the N-terminus, the 204-residue chain is ATP phosphoribosyltransferase (204 aa).

Belongs to the ATP phosphoribosyltransferase family. Short subfamily. As to quaternary structure, heteromultimer composed of HisG and HisZ subunits.

The protein resides in the cytoplasm. It carries out the reaction 1-(5-phospho-beta-D-ribosyl)-ATP + diphosphate = 5-phospho-alpha-D-ribose 1-diphosphate + ATP. Its pathway is amino-acid biosynthesis; L-histidine biosynthesis; L-histidine from 5-phospho-alpha-D-ribose 1-diphosphate: step 1/9. In terms of biological role, catalyzes the condensation of ATP and 5-phosphoribose 1-diphosphate to form N'-(5'-phosphoribosyl)-ATP (PR-ATP). Has a crucial role in the pathway because the rate of histidine biosynthesis seems to be controlled primarily by regulation of HisG enzymatic activity. This is ATP phosphoribosyltransferase from Staphylococcus aureus (strain bovine RF122 / ET3-1).